The sequence spans 908 residues: Protein O-mannosyltransferase 1 (908 aa).

Disordered stretches follow at residues 1–85 and 115–160; these read MYNN…SAIN and GSVE…SGSR. Over residues 21–31 the composition is skewed to basic residues; sequence QRRKTTTRSRS. Composition is skewed to polar residues over residues 39-54 and 132-149; these read CTSENVIEKNQTNGAQ and LTATPTTTPKQASPSPTI. A helical membrane pass occupies residues 190–210; the sequence is FTVNLSIDLFSWTLFLLAFCT. An N-linked (GlcNAc...) asparagine glycan is attached at Asn265. The next 5 helical transmembrane spans lie at 279–299, 311–328, 331–351, 370–390, and 418–438; these read VPIFWFRFIPALCGSLLAPAV, WAAALGGLLVVLDNSLLT, RFVLMESMLLLASTLGIACLL, AGVLLACAGAVKYIGFLALAL, and LSRLLLFVGIPIAVYIGVFYV. MIR domains follow at residues 473–534, 545–602, and 608–664; these read PLAV…VKRP, PDVI…VEIL, and GDSW…VEEH. 4 consecutive transmembrane segments (helical) span residues 749 to 769, 788 to 808, 813 to 833, and 857 to 877; these read VLIWYTASAGILVYATLLAFY, FLMAGDTFFVGYMMHYLPYYF, LFLHNYLPAFVFKLLLLCFVV, and LALLLWLLAVGSVFVKFLPLS.

Belongs to the glycosyltransferase 39 family. In terms of assembly, interacts with tw/POMT2.

It localises to the endoplasmic reticulum membrane. It catalyses the reaction a di-trans,poly-cis-dolichyl beta-D-mannosyl phosphate + L-seryl-[protein] = 3-O-(alpha-D-mannosyl)-L-seryl-[protein] + a di-trans,poly-cis-dolichyl phosphate + H(+). The catalysed reaction is a di-trans,poly-cis-dolichyl beta-D-mannosyl phosphate + L-threonyl-[protein] = 3-O-(alpha-D-mannosyl)-L-threonyl-[protein] + a di-trans,poly-cis-dolichyl phosphate + H(+). It functions in the pathway protein modification; protein glycosylation. Functionally, rt/POMT1 and tw/POMT2 function as a protein O-mannosyltransferase in association with each other to generate and maintain normal muscle development. This chain is Protein O-mannosyltransferase 1, found in Drosophila pseudoobscura pseudoobscura (Fruit fly).